The chain runs to 386 residues: Succinate--CoA ligase [ADP-forming] subunit beta (386 aa).

Residues 9 to 244 (KHILSRFGVS…YDEEIKEEIE (236 aa)) form the ATP-grasp domain. Residues lysine 46, 53–55 (GRG), glutamate 99, cysteine 102, and glutamate 107 each bind ATP. The Mg(2+) site is built by asparagine 199 and aspartate 213. Substrate-binding positions include asparagine 264 and 320–322 (GIM).

Belongs to the succinate/malate CoA ligase beta subunit family. In terms of assembly, heterotetramer of two alpha and two beta subunits. The cofactor is Mg(2+).

The enzyme catalyses succinate + ATP + CoA = succinyl-CoA + ADP + phosphate. It catalyses the reaction GTP + succinate + CoA = succinyl-CoA + GDP + phosphate. It participates in carbohydrate metabolism; tricarboxylic acid cycle; succinate from succinyl-CoA (ligase route): step 1/1. Its function is as follows. Succinyl-CoA synthetase functions in the citric acid cycle (TCA), coupling the hydrolysis of succinyl-CoA to the synthesis of either ATP or GTP and thus represents the only step of substrate-level phosphorylation in the TCA. The beta subunit provides nucleotide specificity of the enzyme and binds the substrate succinate, while the binding sites for coenzyme A and phosphate are found in the alpha subunit. The protein is Succinate--CoA ligase [ADP-forming] subunit beta of Ehrlichia canis (strain Jake).